Here is a 420-residue protein sequence, read N- to C-terminus: Phytoene synthase 1, chloroplastic (420 aa).

A chloroplast-targeting transit peptide spans 1-70; the sequence is MAAITLLRSA…GEIARTSPVY (70 aa).

Belongs to the phytoene/squalene synthase family. Expressed in leaves. Highly expressed in developing leaves. Expressed at low levels in roots.

Its subcellular location is the plastid. The protein resides in the chloroplast membrane. It localises to the chloroplast. The protein localises to the plastoglobule. The enzyme catalyses 2 (2E,6E,10E)-geranylgeranyl diphosphate = 15-cis-phytoene + 2 diphosphate. Catalyzes the conversion of geranylgeranyl diphosphate to phytoene. Mediates the first committed step in carotenoid biosynthesis. The polypeptide is Phytoene synthase 1, chloroplastic (Oryza sativa subsp. japonica (Rice)).